Here is a 328-residue protein sequence, read N- to C-terminus: Type II secretion system protein K (328 aa).

Positions 1–7 (MRSRQRG) are cleaved as a propeptide — leader sequence. Residues 8 to 28 (AALLVVLLILALMVTIAAVIT) form a helical membrane-spanning segment. Residues 29-328 (ERTGKAFLRT…QYGGYRTVNP (300 aa)) are Periplasmic-facing.

The protein belongs to the GSP K family. As to quaternary structure, type II secretion is composed of four main components: the outer membrane complex, the inner membrane complex, the cytoplasmic secretion ATPase and the periplasm-spanning pseudopilus. Interacts with core component OutG. Post-translationally, cleaved by prepilin peptidase.

Its subcellular location is the cell inner membrane. Functionally, component of the type II secretion system required for the energy-dependent secretion of extracellular factors such as proteases and toxins from the periplasm. Plays a role in pseudopilus assembly and seems to control its length. Interacts with the pseudopilus tip complex that is critical for the recognition and binding of secretion substrates. This Pectobacterium carotovorum subsp. carotovorum (Erwinia carotovora subsp. carotovora) protein is Type II secretion system protein K (outK).